Here is a 324-residue protein sequence, read N- to C-terminus: IDS-like terpene synthase 3 (324 aa).

Mg(2+) contacts are provided by aspartate 77 and aspartate 81.

This sequence belongs to the FPP/GGPP synthase family. Mg(2+) is required as a cofactor.

The catalysed reaction is (2E)-geranyl diphosphate + H2O = linalool + diphosphate. It catalyses the reaction (2E,6E)-farnesyl diphosphate + H2O = (6E)-nerolidol + diphosphate. Its function is as follows. Terpene synthase that shows monoterpene synthase activity and produces linalool, using geranyl diphosphate (GPP) as substrate. Also shows sesquiterpene synthase activity as it is able to convert farnesyl diphosphate (FPP) into (E)-nerolidol. The sequence is that of IDS-like terpene synthase 3 from Melampsora lini (Rust fungus).